The chain runs to 106 residues: Probable glutaredoxin (106 aa).

In terms of domain architecture, Glutaredoxin spans I8–Q106. C28 and C31 are disulfide-bonded.

Belongs to the glutaredoxin family.

Its subcellular location is the virion. This is Probable glutaredoxin from Acanthamoeba polyphaga mimivirus (APMV).